Reading from the N-terminus, the 551-residue chain is Eukaryotic translation initiation factor 3 subunit D-2 (551 aa).

The disordered stretch occupies residues 108-152 (RARGRTGRGNATLGGLGGPVAGGSTANSTKYGKGRNTRNAQNMGR). Residues 119 to 128 (TLGGLGGPVA) show a composition bias toward gly residues. An RNA gate region spans residues 290–304 (QFDLLTVNETSLEPP). The interval 530–551 (AFDSDGDDESESSEPFGNSIDN) is disordered. The span at 531-541 (FDSDGDDESES) shows a compositional bias: acidic residues.

It belongs to the eIF-3 subunit D family. In terms of assembly, component of the eukaryotic translation initiation factor 3 (eIF-3) complex. The eIF-3 complex interacts with pix.

The protein resides in the cytoplasm. Functionally, mRNA cap-binding component of the eukaryotic translation initiation factor 3 (eIF-3) complex, which is involved in protein synthesis of a specialized repertoire of mRNAs and, together with other initiation factors, stimulates binding of mRNA and methionyl-tRNAi to the 40S ribosome. The eIF-3 complex specifically targets and initiates translation of a subset of mRNAs involved in cell proliferation. In the eIF-3 complex, eif3d specifically recognizes and binds the 7-methylguanosine cap of a subset of mRNAs. This is Eukaryotic translation initiation factor 3 subunit D-2 from Drosophila yakuba (Fruit fly).